The chain runs to 127 residues: Putative defensin-like protein 180 (127 aa).

The signal sequence occupies residues 1 to 26 (MERITSLVFFASFLIIFVSGVNQTRA). 8 disulfide bridges follow: C29/C70, C36/C55, C39/C64, C43/C66, C81/C127, C92/C112, C97/C121, and C101/C123.

This sequence belongs to the DEFL family.

It localises to the secreted. The protein is Putative defensin-like protein 180 (LCR58) of Arabidopsis thaliana (Mouse-ear cress).